The following is a 141-amino-acid chain: Large ribosomal subunit protein uL13 (141 aa).

It belongs to the universal ribosomal protein uL13 family. In terms of assembly, part of the 50S ribosomal subunit.

This protein is one of the early assembly proteins of the 50S ribosomal subunit, although it is not seen to bind rRNA by itself. It is important during the early stages of 50S assembly. This chain is Large ribosomal subunit protein uL13, found in Helicobacter pylori (strain G27).